Here is a 162-residue protein sequence, read N- to C-terminus: Necrosis-inducing secreted protein 1 (162 aa).

Residues 1–19 (MQFLTSLAAAASLVSLASA) form the signal peptide. Asn88, Asn126, Asn133, and Asn150 each carry an N-linked (GlcNAc...) asparagine glycan. The interval 103 to 132 (EYVIAASLFSLYGASSSPTVSNYNVTVNVG) is BAK1/SERK3-binding.

It belongs to the NIS1 effector family. In terms of assembly, interacts with the host pattern recognition receptor (PRR)-associated kinases BAK1/SERK3, BKK1/SERK4 and BIK1.

The protein resides in the secreted. It localises to the host cytoplasm. Its function is as follows. Secreted effector that induces necrotic lesions in Nicotiana benthamiana. Interacts with the host receptor-like kinases (RLKs) BAK1/SERK3 and BKK1/SERK4, inhibits their kinase activity and suppresses INF1-induced pathogen-associated molecular pattern (PAMP)-triggered immunity (PTI) in N.benthamiana. Also interacts with the host receptor-like cytoplasmic kinase (RLCK) BIK1 and inhibits its kinase activity, thereby inhibiting PAMP-induced ROS generation. In PTI, phosphorylation relaying by RLKs and RLCKs is critical for the initiation of downstream signaling. The protein is Necrosis-inducing secreted protein 1 of Colletotrichum orbiculare (strain 104-T / ATCC 96160 / CBS 514.97 / LARS 414 / MAFF 240422) (Cucumber anthracnose fungus).